We begin with the raw amino-acid sequence, 100 residues long: UPF0298 protein lp_2135 (100 aa).

It belongs to the UPF0298 family.

It localises to the cytoplasm. In Lactiplantibacillus plantarum (strain ATCC BAA-793 / NCIMB 8826 / WCFS1) (Lactobacillus plantarum), this protein is UPF0298 protein lp_2135.